Consider the following 373-residue polypeptide: Glutamate 5-kinase (373 aa).

Lys-15 serves as a coordination point for ATP. Residues Ser-55, Asp-142, and Asn-154 each contribute to the substrate site. Residues 174–175 and 216–222 each bind ATP; these read TD and TGGMVTK. Residues 281 to 359 enclose the PUA domain; that stretch reads SGKIIVDDGA…GEIEAILGYK (79 aa).

The protein belongs to the glutamate 5-kinase family.

It localises to the cytoplasm. The catalysed reaction is L-glutamate + ATP = L-glutamyl 5-phosphate + ADP. It participates in amino-acid biosynthesis; L-proline biosynthesis; L-glutamate 5-semialdehyde from L-glutamate: step 1/2. Catalyzes the transfer of a phosphate group to glutamate to form L-glutamate 5-phosphate. The protein is Glutamate 5-kinase of Geobacter sulfurreducens (strain ATCC 51573 / DSM 12127 / PCA).